The sequence spans 770 residues: Probable methyltransferase PMT24 (770 aa).

The Cytoplasmic segment spans residues methionine 1 to tyrosine 17. Residues glycine 18 to methionine 38 traverse the membrane as a helical; Signal-anchor for type II membrane protein segment. At serine 39–alanine 770 the chain is on the lumenal side. Basic and acidic residues-rich tracts occupy residues glutamate 54–glutamate 81 and asparagine 93–aspartate 164. The interval glutamate 54 to glutamine 223 is disordered. N-linked (GlcNAc...) asparagine glycans are attached at residues asparagine 160 and asparagine 166. A compositionally biased stretch (polar residues) spans glutamate 212 to glutamine 223. N-linked (GlcNAc...) asparagine glycans are attached at residues asparagine 244 and asparagine 363.

This sequence belongs to the methyltransferase superfamily.

The protein resides in the golgi apparatus membrane. The sequence is that of Probable methyltransferase PMT24 from Arabidopsis thaliana (Mouse-ear cress).